We begin with the raw amino-acid sequence, 288 residues long: MSGALNMTLDEIVKRGKTARSGGRGISRGRGRGRGGGGRGAGPARRGPLAVNARPSSFTINKPVRRVRSLPWQSGLFEDGLRAAGASGVEVGTRLHVTNLDQGVTNEDIRELFSEIGEVERYAIHYDKNGRPSGTAEVVYPRRSDAFQALKKYNNVLLDGRPMRLEILGGNNSSEAPLSGRVNVNVTGLNGRLKRTVVIQQGGGGRGRVRGGRGGRGPAPTVSRRLPIHNQQGGGMRGGRGGFRARGRGNGGRGRGGGRGNGKKPVEKSAADLDKDLESYHADAMNTS.

The segment at 1 to 55 (MSGALNMTLDEIVKRGKTARSGGRGISRGRGRGRGGGGRGAGPARRGPLAVNARP) is disordered. Residue serine 2 is modified to N-acetylserine. Residues 93–170 (TRLHVTNLDQ…RPMRLEILGG (78 aa)) enclose the RRM domain. The segment at 201-288 (QGGGGRGRVR…SYHADAMNTS (88 aa)) is disordered. Residues 232-260 (QGGGMRGGRGGFRARGRGNGGRGRGGGRG) are compositionally biased toward gly residues. Over residues 264–281 (KPVEKSAADLDKDLESYH) the composition is skewed to basic and acidic residues.

This sequence belongs to the ALYREF family. In terms of assembly, interacts with PARP1. Interacts with EIF4A3.

The protein localises to the nucleus. Its subcellular location is the nucleoplasm. It localises to the nucleolus. Export adapter involved in nuclear export of spliced and unspliced mRNA. Plays a role in disease resistance. Mediates multiple defense responses triggered by NEP1, including stomatal closure, hypersensitive cell death (HCD) and defense-related gene expression. This is THO complex subunit 4D from Arabidopsis thaliana (Mouse-ear cress).